Here is a 129-residue protein sequence, read N- to C-terminus: Glycine cleavage system H protein (129 aa).

The Lipoyl-binding domain maps to 24–106; the sequence is LVRVGISAFA…HGEGWLLVLR (83 aa). N6-lipoyllysine is present on Lys65.

This sequence belongs to the GcvH family. As to quaternary structure, the glycine cleavage system is composed of four proteins: P, T, L and H. The cofactor is (R)-lipoate.

The glycine cleavage system catalyzes the degradation of glycine. The H protein shuttles the methylamine group of glycine from the P protein to the T protein. The protein is Glycine cleavage system H protein of Parasynechococcus marenigrum (strain WH8102).